Reading from the N-terminus, the 338-residue chain is Lipoate-protein ligase A (338 aa).

One can recognise a BPL/LPL catalytic domain in the interval 29 to 216; it reads PATQRVLFLW…AFFAHYGERV (188 aa). ATP contacts are provided by residues arginine 71, 76 to 79, and lysine 134; that span reads GAVF. Lysine 134 provides a ligand contact to (R)-lipoate.

It belongs to the LplA family. As to quaternary structure, monomer.

Its subcellular location is the cytoplasm. It carries out the reaction L-lysyl-[lipoyl-carrier protein] + (R)-lipoate + ATP = N(6)-[(R)-lipoyl]-L-lysyl-[lipoyl-carrier protein] + AMP + diphosphate + H(+). The protein operates within protein modification; protein lipoylation via exogenous pathway; protein N(6)-(lipoyl)lysine from lipoate: step 1/2. It functions in the pathway protein modification; protein lipoylation via exogenous pathway; protein N(6)-(lipoyl)lysine from lipoate: step 2/2. In terms of biological role, catalyzes both the ATP-dependent activation of exogenously supplied lipoate to lipoyl-AMP and the transfer of the activated lipoyl onto the lipoyl domains of lipoate-dependent enzymes. The chain is Lipoate-protein ligase A from Salmonella arizonae (strain ATCC BAA-731 / CDC346-86 / RSK2980).